The following is a 209-amino-acid chain: Ribosomal RNA large subunit methyltransferase E (209 aa).

S-adenosyl-L-methionine contacts are provided by glycine 63, tryptophan 65, aspartate 83, aspartate 99, and aspartate 124. Lysine 164 acts as the Proton acceptor in catalysis.

The protein belongs to the class I-like SAM-binding methyltransferase superfamily. RNA methyltransferase RlmE family.

The protein localises to the cytoplasm. The catalysed reaction is uridine(2552) in 23S rRNA + S-adenosyl-L-methionine = 2'-O-methyluridine(2552) in 23S rRNA + S-adenosyl-L-homocysteine + H(+). Specifically methylates the uridine in position 2552 of 23S rRNA at the 2'-O position of the ribose in the fully assembled 50S ribosomal subunit. In Shewanella woodyi (strain ATCC 51908 / MS32), this protein is Ribosomal RNA large subunit methyltransferase E.